Here is a 350-residue protein sequence, read N- to C-terminus: Outer membrane porin PhoE (350 aa).

Positions 1 to 20 (MNKSTLAIVVSIIASASVHA) are cleaved as a signal peptide.

It belongs to the Gram-negative porin family. In terms of assembly, homotrimer.

It is found in the cell outer membrane. Functionally, uptake of inorganic phosphate, phosphorylated compounds, and some other negatively charged solutes. The chain is Outer membrane porin PhoE (phoE) from Salmonella typhimurium (strain LT2 / SGSC1412 / ATCC 700720).